The following is a 349-amino-acid chain: Hydroxymethylglutaryl-CoA synthase (349 aa).

(3S)-3-hydroxy-3-methylglutaryl-CoA-binding residues include aspartate 30 and alanine 31. Glutamate 82 serves as the catalytic Proton donor/acceptor. (3S)-3-hydroxy-3-methylglutaryl-CoA-binding residues include cysteine 114 and threonine 155. Catalysis depends on cysteine 114, which acts as the Acyl-thioester intermediate. Arginine 203 lines the CoA pocket. Threonine 205 and histidine 238 together coordinate (3S)-3-hydroxy-3-methylglutaryl-CoA. The Proton donor/acceptor role is filled by histidine 238. Residue lysine 243 participates in CoA binding. Residues asparagine 270 and serine 300 each coordinate (3S)-3-hydroxy-3-methylglutaryl-CoA.

The protein belongs to the thiolase-like superfamily. Archaeal HMG-CoA synthase family. In terms of assembly, interacts with acetoacetyl-CoA thiolase that catalyzes the precedent step in the pathway and with a DUF35 protein. The acetoacetyl-CoA thiolase/HMG-CoA synthase complex channels the intermediate via a fused CoA-binding site, which allows for efficient coupling of the endergonic thiolase reaction with the exergonic HMGCS reaction.

The catalysed reaction is acetoacetyl-CoA + acetyl-CoA + H2O = (3S)-3-hydroxy-3-methylglutaryl-CoA + CoA + H(+). It participates in metabolic intermediate biosynthesis; (R)-mevalonate biosynthesis; (R)-mevalonate from acetyl-CoA: step 2/3. Catalyzes the condensation of acetyl-CoA with acetoacetyl-CoA to form 3-hydroxy-3-methylglutaryl-CoA (HMG-CoA). Functions in the mevalonate (MVA) pathway leading to isopentenyl diphosphate (IPP), a key precursor for the biosynthesis of isoprenoid compounds that are building blocks of archaeal membrane lipids. This chain is Hydroxymethylglutaryl-CoA synthase, found in Methanococcus maripaludis (strain C7 / ATCC BAA-1331).